Here is a 376-residue protein sequence, read N- to C-terminus: Succinyl-diaminopimelate desuccinylase (376 aa).

Histidine 66 is a binding site for Zn(2+). Aspartate 68 is an active-site residue. Aspartate 99 is a binding site for Zn(2+). The active-site Proton acceptor is the glutamate 133. Glutamate 134, glutamate 162, and histidine 348 together coordinate Zn(2+).

It belongs to the peptidase M20A family. DapE subfamily. As to quaternary structure, homodimer. Zn(2+) serves as cofactor. Requires Co(2+) as cofactor.

The catalysed reaction is N-succinyl-(2S,6S)-2,6-diaminopimelate + H2O = (2S,6S)-2,6-diaminopimelate + succinate. It functions in the pathway amino-acid biosynthesis; L-lysine biosynthesis via DAP pathway; LL-2,6-diaminopimelate from (S)-tetrahydrodipicolinate (succinylase route): step 3/3. Catalyzes the hydrolysis of N-succinyl-L,L-diaminopimelic acid (SDAP), forming succinate and LL-2,6-diaminopimelate (DAP), an intermediate involved in the bacterial biosynthesis of lysine and meso-diaminopimelic acid, an essential component of bacterial cell walls. The polypeptide is Succinyl-diaminopimelate desuccinylase (Xanthomonas oryzae pv. oryzae (strain MAFF 311018)).